The primary structure comprises 226 residues: 7-cyano-7-deazaguanine synthase (226 aa).

An ATP-binding site is contributed by 10–20 (FSGGQDSTTLA). Zn(2+) is bound by residues Cys190, Cys205, Cys208, and Cys211.

It belongs to the QueC family. It depends on Zn(2+) as a cofactor.

It carries out the reaction 7-carboxy-7-deazaguanine + NH4(+) + ATP = 7-cyano-7-deazaguanine + ADP + phosphate + H2O + H(+). It functions in the pathway purine metabolism; 7-cyano-7-deazaguanine biosynthesis. Catalyzes the ATP-dependent conversion of 7-carboxy-7-deazaguanine (CDG) to 7-cyano-7-deazaguanine (preQ(0)). In Helicobacter pylori (strain Shi470), this protein is 7-cyano-7-deazaguanine synthase.